The chain runs to 629 residues: MADINSPLEIGVTTGPIRGSKKIYVGARTGSGVRVAMREIQLEGGEEPVRVYDTSGPYTDPEVSIDIQAGLPALRREWIMGRGDVEEYAARAVKPEDNGQLGPDRSGGVPAFPNVARTVLRAKPGQNVSQMHYARKGIITPEMEYVAERENVGRAKLETAPDGQAWGAEIPQEITPEFVRDEVARGRAIIPNNINHPETEPMAIGRNFLVKINANIGNSAVASDVAAEVDKMVWSIRWGADTVMDLSTGRNIHDTREWIIRNSPVPIGTVPIYQALEKVGGIAEDLTWDIFRDTLIEQAEQGVDYFTIHAGVRLPYVPMTAKRVTGIVSRGGSIMAKWCLAHHKESFLYERFDEITEIMKAYDIAYSLGDGLRPGSIADANDEAQFAELYTLGELTKRAWEQDVQVMIEGPGHVPMHKIKENMDKQLEACGEAPFYTLGPLVTDIAPGYDHITSGIGAAQIGWYGTAMLCYVTPKEHLGLPDRDDVKVGVVTYKLAAHAADLAKGHPAAKVRDDALSKARFEFRWRDQFNLSLDPDTAEQYHDQTLPAEGAKTAHFCSMCGPKFCSMKITQEVRDFAAKQNSDSYLASENIKRETSAEEAEEAREGMSDMAELYKAKGERLYLPESEAD.

Residues Asn215, Met244, Tyr273, His309, 329-331 (SRG), 370-373 (DGLR), and Glu409 contribute to the substrate site. A Zn(2+)-binding site is contributed by His413. Tyr436 contributes to the substrate binding site. Residue His477 participates in Zn(2+) binding. 3 residues coordinate [4Fe-4S] cluster: Cys557, Cys560, and Cys565. A disordered region spans residues 589 to 610 (ENIKRETSAEEAEEAREGMSDM).

Belongs to the ThiC family. Homodimer. Requires [4Fe-4S] cluster as cofactor.

The catalysed reaction is 5-amino-1-(5-phospho-beta-D-ribosyl)imidazole + S-adenosyl-L-methionine = 4-amino-2-methyl-5-(phosphooxymethyl)pyrimidine + CO + 5'-deoxyadenosine + formate + L-methionine + 3 H(+). It participates in cofactor biosynthesis; thiamine diphosphate biosynthesis. Its function is as follows. Catalyzes the synthesis of the hydroxymethylpyrimidine phosphate (HMP-P) moiety of thiamine from aminoimidazole ribotide (AIR) in a radical S-adenosyl-L-methionine (SAM)-dependent reaction. This Erythrobacter litoralis (strain HTCC2594) protein is Phosphomethylpyrimidine synthase.